The sequence spans 156 residues: MGKRESYEAKTTELIQPVVEANGVELFDVDYVKEGSDWYLRVYIDKEGGVTIDDCQNVSRAFNEILDRENYIDDQYIFEVSSPGLTRPLKKEKDYEKSIGRMIEIKLFSPVDKSKEYSGVLKEYDKDTVTISIDDVTKTFDRSNLAMIRWAFVDEV.

This sequence belongs to the RimP family.

The protein localises to the cytoplasm. In terms of biological role, required for maturation of 30S ribosomal subunits. The sequence is that of Ribosome maturation factor RimP from Lachnospira eligens (strain ATCC 27750 / DSM 3376 / VPI C15-48 / C15-B4) (Eubacterium eligens).